The following is a 248-amino-acid chain: 14-3-3 protein sigma (248 aa).

A phosphoserine mark is found at serine 5, serine 74, and serine 248.

This sequence belongs to the 14-3-3 family. In terms of assembly, homodimer. Interacts with KRT17 and SAMSN1. Found in a complex with XPO7, EIF4A1, ARHGAP1, VPS26A, VPS29 and VPS35. Interacts with GAB2. Interacts with SRPK2. Interacts with COPS6. Interacts with COP1; this interaction leads to proteasomal degradation. Interacts with the 'Thr-369' phosphorylated form of DAPK2. Interacts with PI4KB. Interacts with SLITRK1. Interacts with LRRK2; this interaction is dependent on LRRK2 phosphorylation. Interacts with PKP3 (via N-terminus); the interaction maintains the cytoplasmic pool of PKP3, facilitates PKP3 exchange at desmosomes and restricts PKP3 localization to existing desmosome cell junctions. Interacts with LCP2. In terms of processing, ubiquitinated. Ubiquitination by RFFL induces proteasomal degradation and indirectly regulates p53/TP53 activation.

It localises to the cytoplasm. It is found in the nucleus. The protein resides in the secreted. Its function is as follows. Adapter protein implicated in the regulation of a large spectrum of both general and specialized signaling pathways. Binds to a large number of partners, usually by recognition of a phosphoserine or phosphothreonine motif. Binding generally results in the modulation of the activity of the binding partner. Promotes cytosolic retention of GBP1 GTPase by binding to phosphorylated GBP1, thereby inhibiting the innate immune response. Also acts as a TP53/p53-regulated inhibitor of G2/M progression. When bound to KRT17, regulates protein synthesis and epithelial cell growth by stimulating Akt/mTOR pathway. Acts to maintain desmosome cell junction adhesion in epithelial cells via interacting with and sequestering PKP3 to the cytoplasm, thereby restricting its translocation to existing desmosome structures and therefore maintaining desmosome protein homeostasis. Also acts to facilitate PKP3 exchange at desmosome plaques, thereby maintaining keratinocyte intercellular adhesion. May also regulate MDM2 autoubiquitination and degradation and thereby activate p53/TP53. This is 14-3-3 protein sigma (SFN) from Bos taurus (Bovine).